The chain runs to 126 residues: Ribosome-binding factor A (126 aa).

This sequence belongs to the RbfA family. Monomer. Binds 30S ribosomal subunits, but not 50S ribosomal subunits or 70S ribosomes.

It localises to the cytoplasm. Functionally, one of several proteins that assist in the late maturation steps of the functional core of the 30S ribosomal subunit. Associates with free 30S ribosomal subunits (but not with 30S subunits that are part of 70S ribosomes or polysomes). Required for efficient processing of 16S rRNA. May interact with the 5'-terminal helix region of 16S rRNA. This Nitrosospira multiformis (strain ATCC 25196 / NCIMB 11849 / C 71) protein is Ribosome-binding factor A.